Consider the following 173-residue polypeptide: Crossover junction endodeoxyribonuclease RuvC (173 aa).

Catalysis depends on residues aspartate 8, glutamate 67, and aspartate 139. Aspartate 8, glutamate 67, and aspartate 139 together coordinate Mg(2+).

It belongs to the RuvC family. Homodimer which binds Holliday junction (HJ) DNA. The HJ becomes 2-fold symmetrical on binding to RuvC with unstacked arms; it has a different conformation from HJ DNA in complex with RuvA. In the full resolvosome a probable DNA-RuvA(4)-RuvB(12)-RuvC(2) complex forms which resolves the HJ. The cofactor is Mg(2+).

It localises to the cytoplasm. It catalyses the reaction Endonucleolytic cleavage at a junction such as a reciprocal single-stranded crossover between two homologous DNA duplexes (Holliday junction).. The RuvA-RuvB-RuvC complex processes Holliday junction (HJ) DNA during genetic recombination and DNA repair. Endonuclease that resolves HJ intermediates. Cleaves cruciform DNA by making single-stranded nicks across the HJ at symmetrical positions within the homologous arms, yielding a 5'-phosphate and a 3'-hydroxyl group; requires a central core of homology in the junction. The consensus cleavage sequence is 5'-(A/T)TT(C/G)-3'. Cleavage occurs on the 3'-side of the TT dinucleotide at the point of strand exchange. HJ branch migration catalyzed by RuvA-RuvB allows RuvC to scan DNA until it finds its consensus sequence, where it cleaves and resolves the cruciform DNA. This is Crossover junction endodeoxyribonuclease RuvC from Psychromonas ingrahamii (strain DSM 17664 / CCUG 51855 / 37).